A 531-amino-acid polypeptide reads, in one-letter code: uncharacterized protein (531 aa).

Positions 1-28 (MNTKGIIAKLTAGALIANLLICPANTLA) are cleaved as a signal peptide. 3 SLH domains span residues 29 to 85 (EKKT…QINK), 86 to 149 (QAKP…IGDL), and 150 to 210 (PTQF…SKRM). Residues 335–517 (IIIDPGHGGI…AAEAIYAGIL (183 aa)) enclose the MurNAc-LAA domain.

This sequence in the C-terminal section; belongs to the N-acetylmuramoyl-L-alanine amidase 3 family.

Its subcellular location is the secreted. It localises to the cell wall. The protein resides in the S-layer. This is an uncharacterized protein from Bacillus anthracis.